A 459-amino-acid chain; its full sequence is Cysteine--tRNA ligase (459 aa).

Cysteine 28 is a Zn(2+) binding site. The short motif at 30 to 40 (VTVYDLCHIGH) is the 'HIGH' region element. Zn(2+) contacts are provided by cysteine 209, histidine 234, and glutamate 238. The 'KMSKS' region signature appears at 266–270 (KMSKS). Lysine 269 serves as a coordination point for ATP.

Belongs to the class-I aminoacyl-tRNA synthetase family. As to quaternary structure, monomer. It depends on Zn(2+) as a cofactor.

The protein resides in the cytoplasm. The catalysed reaction is tRNA(Cys) + L-cysteine + ATP = L-cysteinyl-tRNA(Cys) + AMP + diphosphate. This is Cysteine--tRNA ligase from Histophilus somni (strain 129Pt) (Haemophilus somnus).